Reading from the N-terminus, the 128-residue chain is Histone H2A type 1-J (128 aa).

Residues 1–22 (MSGRGKQGGKARAKAKTRSSRA) are disordered. Ser2 carries the post-translational modification N-acetylserine. At Ser2 the chain carries Phosphoserine; by RPS6KA5. Arg4 is modified (citrulline; alternate). Arg4 carries the symmetric dimethylarginine; by PRMT5; alternate modification. An N6-(2-hydroxyisobutyryl)lysine modification is found at Lys6. Residues 7–19 (QGGKARAKAKTRS) are compositionally biased toward basic residues. The residue at position 10 (Lys10) is an N6-(2-hydroxyisobutyryl)lysine; alternate. Residues Lys10 and Lys14 each carry the N6-(beta-hydroxybutyryl)lysine; alternate modification. Lys10 carries the N6-lactoyllysine; alternate modification. Lys10 bears the N6-succinyllysine; alternate mark. Residue Lys14 forms a Glycyl lysine isopeptide (Lys-Gly) (interchain with G-Cter in ubiquitin); alternate linkage. Residue Lys16 forms a Glycyl lysine isopeptide (Lys-Gly) (interchain with G-Cter in ubiquitin) linkage. Residue Lys37 is modified to N6-(2-hydroxyisobutyryl)lysine; alternate. Lys37 carries the N6-(beta-hydroxybutyryl)lysine; alternate modification. Lys37 carries the post-translational modification N6-crotonyllysine; alternate. Lys75 and Lys76 each carry N6-(2-hydroxyisobutyryl)lysine. An N6-(2-hydroxyisobutyryl)lysine; alternate modification is found at Lys96. An N6-(beta-hydroxybutyryl)lysine; alternate modification is found at Lys96. Lys96 carries the post-translational modification N6-succinyllysine; alternate. Lys96 bears the N6-glutaryllysine; alternate mark. Position 100 is an N6-glutaryllysine (Lys100). Gln105 carries the N5-methylglutamine modification. Lys119 carries the post-translational modification N6-(2-hydroxyisobutyryl)lysine; alternate. Lys119 carries the N6-(beta-hydroxybutyryl)lysine; alternate modification. 2 positions are modified to N6-crotonyllysine; alternate: Lys119 and Lys120. Lys119 and Lys120 each carry N6-glutaryllysine; alternate. Lys120 is covalently cross-linked (Glycyl lysine isopeptide (Lys-Gly) (interchain with G-Cter in ubiquitin); alternate). Thr121 is subject to Phosphothreonine; by DCAF1. Lys126 carries the N6-crotonyllysine; alternate modification. Position 126 is an N6-glutaryllysine; alternate (Lys126).

It belongs to the histone H2A family. The nucleosome is a histone octamer containing two molecules each of H2A, H2B, H3 and H4 assembled in one H3-H4 heterotetramer and two H2A-H2B heterodimers. The octamer wraps approximately 147 bp of DNA. In terms of processing, deiminated on Arg-4 in granulocytes upon calcium entry. Monoubiquitination of Lys-120 (H2AK119Ub) by RING1, TRIM37 and RNF2/RING2 complex gives a specific tag for epigenetic transcriptional repression and participates in X chromosome inactivation of female mammals. It is involved in the initiation of both imprinted and random X inactivation. Ubiquitinated H2A is enriched in inactive X chromosome chromatin. Ubiquitination of H2A functions downstream of methylation of 'Lys-27' of histone H3 (H3K27me). H2AK119Ub by RNF2/RING2 can also be induced by ultraviolet and may be involved in DNA repair. Monoubiquitination of Lys-120 (H2AK119Ub) by TRIM37 may promote transformation of cells in a number of breast cancers. Following DNA double-strand breaks (DSBs), it is ubiquitinated through 'Lys-63' linkage of ubiquitin moieties by the E2 ligase UBE2N and the E3 ligases RNF8 and RNF168, leading to the recruitment of repair proteins to sites of DNA damage. Ubiquitination at Lys-14 and Lys-16 (H2AK13Ub and H2AK15Ub, respectively) in response to DNA damage is initiated by RNF168 that mediates monoubiquitination at these 2 sites, and 'Lys-63'-linked ubiquitin are then conjugated to monoubiquitin; RNF8 is able to extend 'Lys-63'-linked ubiquitin chains in vitro. Deubiquitinated by USP51 at Lys-14 and Lys-16 (H2AK13Ub and H2AK15Ub, respectively) after damaged DNA is repaired. H2AK119Ub and ionizing radiation-induced 'Lys-63'-linked ubiquitination (H2AK13Ub and H2AK15Ub) are distinct events. Post-translationally, phosphorylation on Ser-2 (H2AS1ph) is enhanced during mitosis. Phosphorylation on Ser-2 by RPS6KA5/MSK1 directly represses transcription. Acetylation of H3 inhibits Ser-2 phosphorylation by RPS6KA5/MSK1. Phosphorylation at Thr-121 (H2AT120ph) by DCAF1 is present in the regulatory region of many tumor suppresor genes and down-regulates their transcription. In terms of processing, glutamine methylation at Gln-105 (H2AQ104me) by FBL is specifically dedicated to polymerase I. It is present at 35S ribosomal DNA locus and impairs binding of the FACT complex. Symmetric dimethylation on Arg-4 by the PRDM1/PRMT5 complex may play a crucial role in the germ-cell lineage. Post-translationally, crotonylation (Kcr) is specifically present in male germ cells and marks testis-specific genes in post-meiotic cells, including X-linked genes that escape sex chromosome inactivation in haploid cells. Crotonylation marks active promoters and enhancers and confers resistance to transcriptional repressors. It is also associated with post-meiotically activated genes on autosomes. In terms of processing, lactylated in macrophages by EP300/P300 by using lactoyl-CoA directly derived from endogenous or exogenous lactate, leading to stimulates gene transcription.

The protein localises to the nucleus. Its subcellular location is the chromosome. Its function is as follows. Core component of nucleosome. Nucleosomes wrap and compact DNA into chromatin, limiting DNA accessibility to the cellular machineries which require DNA as a template. Histones thereby play a central role in transcription regulation, DNA repair, DNA replication and chromosomal stability. DNA accessibility is regulated via a complex set of post-translational modifications of histones, also called histone code, and nucleosome remodeling. This is Histone H2A type 1-J from Homo sapiens (Human).